Reading from the N-terminus, the 217-residue chain is Carboxylesterase Culp1 (217 aa).

The N-terminal stretch at 1 to 32 (MTPRSLVRIVGVVVATTLALVSAPAGGRAAHA) is a signal peptide. A disulfide bond links C35 and C107. The active-site Nucleophile is the S118. C177 and C184 are disulfide-bonded. D181 is an active-site residue. The Proton donor/acceptor role is filled by H193.

Belongs to the cutinase family.

The protein localises to the secreted. It catalyses the reaction a fatty acid ester + H2O = an aliphatic alcohol + a fatty acid + H(+). Functionally, shows esterase activity, with a preference for short- and medium-chain fatty acids. In Mycobacterium bovis (strain ATCC BAA-935 / AF2122/97), this protein is Carboxylesterase Culp1.